Reading from the N-terminus, the 139-residue chain is UPF0216 protein MJ1224 (139 aa).

Belongs to the UPF0216 family.

The protein is UPF0216 protein MJ1224 of Methanocaldococcus jannaschii (strain ATCC 43067 / DSM 2661 / JAL-1 / JCM 10045 / NBRC 100440) (Methanococcus jannaschii).